The primary structure comprises 192 residues: Bifunctional protein PyrR (192 aa).

Substrate is bound by residues 49 to 50 (SG), R90, 111 to 119 (DDVLFSGRT), R144, and V168. The PRPP-binding signature appears at 107 to 119 (VILVDDVLFSGRT).

It belongs to the purine/pyrimidine phosphoribosyltransferase family. PyrR subfamily.

It carries out the reaction UMP + diphosphate = 5-phospho-alpha-D-ribose 1-diphosphate + uracil. Its function is as follows. Regulates the transcription of the pyrimidine nucleotide (pyr) operon in response to exogenous pyrimidines. In terms of biological role, also displays a weak uracil phosphoribosyltransferase activity which is not physiologically significant. The protein is Bifunctional protein PyrR of Corynebacterium glutamicum (strain ATCC 13032 / DSM 20300 / JCM 1318 / BCRC 11384 / CCUG 27702 / LMG 3730 / NBRC 12168 / NCIMB 10025 / NRRL B-2784 / 534).